The primary structure comprises 566 residues: Alpha-N-acetylgalactosaminide alpha-2,6-sialyltransferase 1 (566 aa).

The Cytoplasmic segment spans residues 1–16 (MGFLIRRLPKDSRIFR). Residues 17-37 (WLLILTVFSFIITSFSALFGM) traverse the membrane as a helical; Signal-anchor for type II membrane protein segment. Over 38 to 566 (EKSIFRQLKI…ENIMKLYQRS (529 aa)) the chain is Lumenal. 2 N-linked (GlcNAc...) asparagine glycosylation sites follow: N66 and N132. Residues 138-161 (ASVVERTKEKTTARPVPGVGEADG) are disordered. N-linked (GlcNAc...) asparagine glycosylation occurs at N192. Repeat unit 1 spans residues 247 to 254 (SSSPVSTC). The 2 X 8 AA repeats of S-S-S-X-V-S-T-C stretch occupies residues 247–337 (SSSPVSTCSE…ANSSSNVSTC (91 aa)). 2 disulfides stabilise this stretch: C254–C337 and C340–C508. N275, N286, N306, N329, and N333 each carry an N-linked (GlcNAc...) asparagine glycan. The stretch at 330–337 (SSSNVSTC) is repeat 2.

It belongs to the glycosyltransferase 29 family. Heart, kidney, testes, brain, liver and lung.

The protein localises to the golgi apparatus membrane. The catalysed reaction is a beta-D-galactosyl-(1-&gt;3)-N-acetyl-alpha-D-galactosaminyl derivative + CMP-N-acetyl-beta-neuraminate = a beta-D-galactosyl-(1-&gt;3)-[N-acetyl-alpha-neuraminyl-(2-&gt;6)]-N-acetyl-alpha-D-galactosaminyl derivative + CMP + H(+). It catalyses the reaction a 3-O-[N-acetyl-alpha-D-galactosaminyl]-L-seryl-[protein] + CMP-N-acetyl-beta-neuraminate = a 3-O-[N-acetyl-alpha-neuraminosyl-(2-&gt;6)-N-acetyl-alpha-D-galactosaminyl]-L-seryl-[protein] + CMP + H(+). The enzyme catalyses a 3-O-[N-acetyl-alpha-D-galactosaminyl]-L-threonyl-[protein] + CMP-N-acetyl-beta-neuraminate = a 3-O-[N-acetyl-alpha-neuraminosyl-(2-&gt;6)-N-acetyl-alpha-D-galactosaminyl]-L-threonyl-[protein] + CMP + H(+). It carries out the reaction a 3-O-[beta-D-galactosyl-(1-&gt;3)-N-acetyl-alpha-D-galactosaminyl]-L-seryl-[protein] + CMP-N-acetyl-beta-neuraminate = a 3-O-{beta-D-galactosyl-(1-&gt;3)-[N-acetyl-alpha-neuraminosyl-(2-&gt;6)]-N-acetyl-alpha-D-galactosaminyl}-L-seryl-[protein] + CMP + H(+). The catalysed reaction is a 3-O-[beta-D-galactosyl-(1-&gt;3)-N-acetyl-alpha-D-galactosaminyl]-L-threonyl-[protein] + CMP-N-acetyl-beta-neuraminate = a 3-O-{beta-D-galactosyl-(1-&gt;3)-[N-acetyl-alpha-neuraminosyl-(2-&gt;6)]-N-acetyl-alpha-D-galactosaminyl}-L-threonyl-[protein] + CMP + H(+). It catalyses the reaction a 3-O-[N-acetyl-alpha-neuraminyl-(2-&gt;3)-beta-D-galactosyl-(1-&gt;3)-N-acetyl-alpha-D-galactosaminyl]-L-threonyl-[protein] + CMP-N-acetyl-beta-neuraminate = a 3-O-{alpha-Neu5Ac-(2-&gt;3)-beta-D-Gal-(1-&gt;3)-[alpha-Neu5Ac-(2-&gt;6)]-alpha-D-GalNAc}-L-threonyl-[protein] + CMP + H(+). The protein operates within protein modification; protein glycosylation. Functionally, protein sialyltransferase specifically expressed in goblet cells that plays a key role in intestinal host-commensal homeostasis. Conjugates sialic acid with an alpha-2-6 linkage to N-acetylgalactosamine (GalNAc) glycan chains linked to serine or threonine in glycoproteins. Generates sialylated T and Tn antigens.. This chain is Alpha-N-acetylgalactosaminide alpha-2,6-sialyltransferase 1 (ST6GALNAC1), found in Gallus gallus (Chicken).